The sequence spans 210 residues: MTDPITPHPGENQAAKLEKLRTALEEFSRRQEEGAASSLFDREAEEKKAEVRRRALLLLDQRARSRSELQGRLGALDFDHDIIEEVLDDLTRANLINDESFAQEWVRQRAQRRGKSTRVLDRELRDKGVDAGIRARALEQIDPEDERDTARAVAVKKARSESRIPADRSDYDKALRRVVGALARRGFPAGMSMDLAREALDERIEDLRQH.

The interval 28–47 (SRRQEEGAASSLFDREAEEK) is disordered.

This sequence belongs to the RecX family.

Its subcellular location is the cytoplasm. Its function is as follows. Modulates RecA activity. This is Regulatory protein RecX from Corynebacterium efficiens (strain DSM 44549 / YS-314 / AJ 12310 / JCM 11189 / NBRC 100395).